The following is a 490-amino-acid chain: Auxin transporter-like protein 5 (490 aa).

Over 1–55 (MEMANDKVAETVIVGNYVEMESEGKPPQDIKSKLSNFLWHGGSAYDAWFSCASNQ) the chain is Cytoplasmic. Residues 56 to 73 (VAQVLLTLPYSFSQLGML) form a helical membrane-spanning segment. Topologically, residues 74–75 (SG) are extracellular. The chain crosses the membrane as a helical span at residues 76-96 (ILFQLFYGILGSWTAYLISIL). At 97-132 (YVEYRTRKEREKVNFRSHVIQWFEVLDGLLGKHWRN) the chain is on the cytoplasmic side. The chain crosses the membrane as a helical span at residues 133–153 (VGLGFNCTFLLFGSVIQLIAC). Topologically, residues 154–168 (ASNIYYINDNLDKRT) are extracellular. The chain crosses the membrane as a helical span at residues 169 to 189 (WTYIFGACCATTVFIPSFHNY). Position 190 (arginine 190) is a topological domain, cytoplasmic. The chain crosses the membrane as a helical span at residues 191–211 (IWSFLGLVMTTYTAWYLTIAA). Residues 212-227 (VLHGQVEGVKHSGPNK) are Extracellular-facing. The helical transmembrane segment at 228-248 (IILYFTGATNILYTFGGHAVT) threads the bilayer. Topologically, residues 249-262 (VEIMHAMWKPQKFK) are cytoplasmic. Residues 263–283 (AIYLLATLYVLTLTIPSATAV) traverse the membrane as a helical segment. Residues 284 to 310 (YWAFGDMLLNHSNAFALLPKSPFRDMA) are Extracellular-facing. N-linked (GlcNAc...) asparagine glycosylation is present at asparagine 293. The chain crosses the membrane as a helical span at residues 311-331 (VILMLIHQFITFGFACTPLYF). The Cytoplasmic portion of the chain corresponds to 332–352 (VWEKTVGMHECKSLCKRALVR). Residues 353–373 (LPVVIPIWFLAIIFPFFGPIN) form a helical membrane-spanning segment. Residues 374-376 (STV) lie on the Extracellular side of the membrane. A helical membrane pass occupies residues 377-397 (GSLLVSFTVYIIPALAHIFTF). Topologically, residues 398–420 (KSSSARQNAVEQPPKFVGRWVGT) are cytoplasmic. Residues 421-441 (FVINVFIVVWVLIVGFGFGGW) form a helical membrane-spanning segment. The Extracellular segment spans residues 442 to 490 (ASMVNFVHQIDTFGLFTKCYQCPPPTPSVPTMPPHQMNATAPSPHHHHH). The N-linked (GlcNAc...) asparagine glycan is linked to asparagine 479.

The protein belongs to the amino acid/polyamine transporter 2 family. Amino acid/auxin permease (AAAP) (TC 2.A.18.1) subfamily. Shoots and roots of nodulating plants, at low levels.

The protein localises to the cell membrane. Carrier protein involved in proton-driven auxin influx. Mediates the formation of auxin gradient from developing leaves (site of auxin biosynthesis) to tips by contributing to the loading of auxin in vascular tissues and facilitating acropetal (base to tip) auxin transport within inner tissues of the root apex, and basipetal (tip to base) auxin transport within outer tissues of the root apex. May be involved in lateral roots and nodules formation. The sequence is that of Auxin transporter-like protein 5 (LAX5) from Medicago truncatula (Barrel medic).